Here is a 119-residue protein sequence, read N- to C-terminus: Protein TusC (119 aa).

This sequence belongs to the DsrF/TusC family. In terms of assembly, heterohexamer, formed by a dimer of trimers. The hexameric TusBCD complex contains 2 copies each of TusB, TusC and TusD. The TusBCD complex interacts with TusE.

The protein localises to the cytoplasm. Part of a sulfur-relay system required for 2-thiolation of 5-methylaminomethyl-2-thiouridine (mnm(5)s(2)U) at tRNA wobble positions. The polypeptide is Protein TusC (Buchnera aphidicola subsp. Acyrthosiphon pisum (strain APS) (Acyrthosiphon pisum symbiotic bacterium)).